Here is a 141-residue protein sequence, read N- to C-terminus: Small ribosomal subunit protein uS12 (141 aa).

Belongs to the universal ribosomal protein uS12 family. Part of the 30S ribosomal subunit.

In terms of biological role, with S4 and S5 plays an important role in translational accuracy. Located at the interface of the 30S and 50S subunits. The protein is Small ribosomal subunit protein uS12 of Methanosphaera stadtmanae (strain ATCC 43021 / DSM 3091 / JCM 11832 / MCB-3).